The following is a 599-amino-acid chain: Elongation factor 4 (599 aa).

One can recognise a tr-type G domain in the interval 5-187; sequence SHIRNFSIIA…VLIKSVPAPV (183 aa). GTP is bound by residues 17–22 and 134–137; these read DHGKST and NKID.

It belongs to the TRAFAC class translation factor GTPase superfamily. Classic translation factor GTPase family. LepA subfamily.

It is found in the cell inner membrane. The enzyme catalyses GTP + H2O = GDP + phosphate + H(+). Functionally, required for accurate and efficient protein synthesis under certain stress conditions. May act as a fidelity factor of the translation reaction, by catalyzing a one-codon backward translocation of tRNAs on improperly translocated ribosomes. Back-translocation proceeds from a post-translocation (POST) complex to a pre-translocation (PRE) complex, thus giving elongation factor G a second chance to translocate the tRNAs correctly. Binds to ribosomes in a GTP-dependent manner. The chain is Elongation factor 4 from Saccharophagus degradans (strain 2-40 / ATCC 43961 / DSM 17024).